A 952-amino-acid chain; its full sequence is Isoleucine--tRNA ligase (952 aa).

The 'HIGH' region motif lies at 58–68 (PYANGDIHIGH). Glu-576 serves as a coordination point for L-isoleucyl-5'-AMP. A 'KMSKS' region motif is present at residues 617–621 (KMSKS). Lys-620 lines the ATP pocket. Positions 915, 918, 935, and 938 each coordinate Zn(2+).

Belongs to the class-I aminoacyl-tRNA synthetase family. IleS type 1 subfamily. In terms of assembly, monomer. Requires Zn(2+) as cofactor.

It localises to the cytoplasm. It catalyses the reaction tRNA(Ile) + L-isoleucine + ATP = L-isoleucyl-tRNA(Ile) + AMP + diphosphate. Its function is as follows. Catalyzes the attachment of isoleucine to tRNA(Ile). As IleRS can inadvertently accommodate and process structurally similar amino acids such as valine, to avoid such errors it has two additional distinct tRNA(Ile)-dependent editing activities. One activity is designated as 'pretransfer' editing and involves the hydrolysis of activated Val-AMP. The other activity is designated 'posttransfer' editing and involves deacylation of mischarged Val-tRNA(Ile). This chain is Isoleucine--tRNA ligase, found in Aliivibrio fischeri (strain MJ11) (Vibrio fischeri).